The sequence spans 152 residues: Large ribosomal subunit protein bL9 (152 aa).

It belongs to the bacterial ribosomal protein bL9 family.

Functionally, binds to the 23S rRNA. The protein is Large ribosomal subunit protein bL9 of Synechococcus sp. (strain RCC307).